The chain runs to 207 residues: Thiamine-phosphate synthase (207 aa).

Residues Q35–K39 and N67 contribute to the 4-amino-2-methyl-5-(diphosphooxymethyl)pyrimidine site. Mg(2+) contacts are provided by D68 and D86. T105 lines the 4-amino-2-methyl-5-(diphosphooxymethyl)pyrimidine pocket. S132–T134 lines the 2-[(2R,5Z)-2-carboxy-4-methylthiazol-5(2H)-ylidene]ethyl phosphate pocket. Residue K135 coordinates 4-amino-2-methyl-5-(diphosphooxymethyl)pyrimidine. 2-[(2R,5Z)-2-carboxy-4-methylthiazol-5(2H)-ylidene]ethyl phosphate is bound at residue G162.

Belongs to the thiamine-phosphate synthase family. It depends on Mg(2+) as a cofactor.

The catalysed reaction is 2-[(2R,5Z)-2-carboxy-4-methylthiazol-5(2H)-ylidene]ethyl phosphate + 4-amino-2-methyl-5-(diphosphooxymethyl)pyrimidine + 2 H(+) = thiamine phosphate + CO2 + diphosphate. It carries out the reaction 2-(2-carboxy-4-methylthiazol-5-yl)ethyl phosphate + 4-amino-2-methyl-5-(diphosphooxymethyl)pyrimidine + 2 H(+) = thiamine phosphate + CO2 + diphosphate. It catalyses the reaction 4-methyl-5-(2-phosphooxyethyl)-thiazole + 4-amino-2-methyl-5-(diphosphooxymethyl)pyrimidine + H(+) = thiamine phosphate + diphosphate. The protein operates within cofactor biosynthesis; thiamine diphosphate biosynthesis; thiamine phosphate from 4-amino-2-methyl-5-diphosphomethylpyrimidine and 4-methyl-5-(2-phosphoethyl)-thiazole: step 1/1. Condenses 4-methyl-5-(beta-hydroxyethyl)thiazole monophosphate (THZ-P) and 2-methyl-4-amino-5-hydroxymethyl pyrimidine pyrophosphate (HMP-PP) to form thiamine monophosphate (TMP). The polypeptide is Thiamine-phosphate synthase (Pseudomonas putida (strain ATCC 700007 / DSM 6899 / JCM 31910 / BCRC 17059 / LMG 24140 / F1)).